The chain runs to 615 residues: Chaperone protein DnaK (615 aa).

T175 is subject to Phosphothreonine; by autocatalysis. The disordered stretch occupies residues 573 to 615 (SQEMYQKAAQEQQAAQGAEQAQDNGPKDDNVVDADFKEVDEDK). Over residues 580-594 (AAQEQQAAQGAEQAQ) the composition is skewed to low complexity. A compositionally biased stretch (basic and acidic residues) spans 597 to 609 (GPKDDNVVDADFK).

Belongs to the heat shock protein 70 family.

Functionally, acts as a chaperone. This is Chaperone protein DnaK from Clostridioides difficile (strain 630) (Peptoclostridium difficile).